A 104-amino-acid polypeptide reads, in one-letter code: Large ribosomal subunit protein uL23 (104 aa).

This sequence belongs to the universal ribosomal protein uL23 family. In terms of assembly, part of the 50S ribosomal subunit. Contacts protein L29, and trigger factor when it is bound to the ribosome.

Functionally, one of the early assembly proteins it binds 23S rRNA. One of the proteins that surrounds the polypeptide exit tunnel on the outside of the ribosome. Forms the main docking site for trigger factor binding to the ribosome. The polypeptide is Large ribosomal subunit protein uL23 (Leptospira borgpetersenii serovar Hardjo-bovis (strain JB197)).